A 662-amino-acid polypeptide reads, in one-letter code: Protein Aster-C (662 aa).

Residues 1 to 34 (MEGAPTVRQVMNEGDSSLATDLQEDVEENPSPTV) form a disordered region. The 68-residue stretch at 69–136 (EEYRRQFTHL…KNITFMTKEK (68 aa)) folds into the GRAM domain. 2 disordered regions span residues 212–237 (SIED…EKLS) and 249–284 (RVSE…LPTL). Over residues 265–276 (LGKEESQNEKQT) the composition is skewed to basic and acidic residues. The VASt domain maps to 326–497 (HGRLFINRIF…DLLIEESVLN (172 aa)). A helical membrane pass occupies residues 557 to 577 (LIVVMSIFVLLLVLLNVTLFL).

Its subcellular location is the endoplasmic reticulum membrane. It is found in the cell membrane. Cholesterol transporter that mediates non-vesicular transport of cholesterol from the plasma membrane (PM) to the endoplasmic reticulum (ER). Contains unique domains for binding cholesterol and the PM, thereby serving as a molecular bridge for the transfer of cholesterol from the PM to the ER. Plays a crucial role in cholesterol homeostasis and has the unique ability to localize to the PM based on the level of membrane cholesterol. In lipid-poor conditions localizes to the ER membrane and in response to excess cholesterol in the PM is recruited to the endoplasmic reticulum-plasma membrane contact sites (EPCS) which is mediated by the GRAM domain. At the EPCS, the sterol-binding VASt/ASTER domain binds to the cholesterol in the PM and facilitates its transfer from the PM to ER. This Homo sapiens (Human) protein is Protein Aster-C (GRAMD1C).